The chain runs to 369 residues: tRNA-specific 2-thiouridylase MnmA (369 aa).

ATP-binding positions include 12–19 (GMSGGVDS) and Met38. The interval 98–100 (NPD) is interaction with target base in tRNA. Residue Cys103 is the Nucleophile of the active site. A disulfide bond links Cys103 and Cys200. Gly128 is an ATP binding site. The tract at residues 150–152 (KDQ) is interaction with tRNA. Catalysis depends on Cys200, which acts as the Cysteine persulfide intermediate. The segment at 312–313 (RY) is interaction with tRNA.

It belongs to the MnmA/TRMU family.

It localises to the cytoplasm. It catalyses the reaction S-sulfanyl-L-cysteinyl-[protein] + uridine(34) in tRNA + AH2 + ATP = 2-thiouridine(34) in tRNA + L-cysteinyl-[protein] + A + AMP + diphosphate + H(+). Its function is as follows. Catalyzes the 2-thiolation of uridine at the wobble position (U34) of tRNA, leading to the formation of s(2)U34. The chain is tRNA-specific 2-thiouridylase MnmA from Tolumonas auensis (strain DSM 9187 / NBRC 110442 / TA 4).